The sequence spans 211 residues: LexA repressor (211 aa).

Residues Arg35–Lys55 constitute a DNA-binding region (H-T-H motif). Active-site for autocatalytic cleavage activity residues include Ser128 and Lys165.

This sequence belongs to the peptidase S24 family. In terms of assembly, homodimer.

It catalyses the reaction Hydrolysis of Ala-|-Gly bond in repressor LexA.. Represses a number of genes involved in the response to DNA damage (SOS response), including recA and lexA. In the presence of single-stranded DNA, RecA interacts with LexA causing an autocatalytic cleavage which disrupts the DNA-binding part of LexA, leading to derepression of the SOS regulon and eventually DNA repair. The polypeptide is LexA repressor (Colwellia psychrerythraea (strain 34H / ATCC BAA-681) (Vibrio psychroerythus)).